A 454-amino-acid chain; its full sequence is Phosphoglucosamine mutase (454 aa).

Ser101 acts as the Phosphoserine intermediate in catalysis. Mg(2+)-binding residues include Ser101, Asp243, Asp245, and Asp247. The residue at position 101 (Ser101) is a Phosphoserine.

This sequence belongs to the phosphohexose mutase family. Mg(2+) is required as a cofactor. Activated by phosphorylation.

It catalyses the reaction alpha-D-glucosamine 1-phosphate = D-glucosamine 6-phosphate. Functionally, catalyzes the conversion of glucosamine-6-phosphate to glucosamine-1-phosphate. In Geotalea daltonii (strain DSM 22248 / JCM 15807 / FRC-32) (Geobacter daltonii), this protein is Phosphoglucosamine mutase.